A 639-amino-acid chain; its full sequence is Polyphenol oxidase, chloroplastic (639 aa).

Residues 1-101 (MATLSSPTII…EGANYYNTLA (101 aa)) constitute a chloroplast transit peptide. The interval 35–58 (GVRSVNGKVSCQTKNNNGNDENNQ) is disordered. Cystine bridges form between Cys111-Cys127 and Cys126-Cys194. The Cu cation site is built by His193, His214, His223, His354, His358, and His388. The 2'-(S-cysteinyl)-histidine (Cys-His) cross-link spans 197–214 (CDGSYPVLGHNDTRLEVH).

Belongs to the tyrosinase family. The cofactor is Cu(2+).

The protein resides in the plastid. The protein localises to the chloroplast thylakoid lumen. It catalyses the reaction 2 catechol + O2 = 2 1,2-benzoquinone + 2 H2O. In terms of biological role, catalyzes the oxidation of mono- and o-diphenols to o-diquinones. This chain is Polyphenol oxidase, chloroplastic, found in Spinacia oleracea (Spinach).